The chain runs to 359 residues: Histidinol-phosphate aminotransferase (359 aa).

Residue lysine 212 is modified to N6-(pyridoxal phosphate)lysine.

Belongs to the class-II pyridoxal-phosphate-dependent aminotransferase family. Histidinol-phosphate aminotransferase subfamily. Homodimer. Pyridoxal 5'-phosphate is required as a cofactor.

It carries out the reaction L-histidinol phosphate + 2-oxoglutarate = 3-(imidazol-4-yl)-2-oxopropyl phosphate + L-glutamate. The protein operates within amino-acid biosynthesis; L-histidine biosynthesis; L-histidine from 5-phospho-alpha-D-ribose 1-diphosphate: step 7/9. The chain is Histidinol-phosphate aminotransferase from Buchnera aphidicola subsp. Melaphis rhois.